Reading from the N-terminus, the 914-residue chain is Serine/threonine-protein kinase MST20 (914 aa).

The span at 1–12 (MDGHSNFTQPSD) shows a compositional bias: polar residues. Disordered stretches follow at residues 1–140 (MDGH…QLQN), 156–184 (NQYS…LTFN), and 251–286 (AMSE…VLRK). Low complexity-rich tracts occupy residues 13 to 26 (TSHA…SSSS), 63 to 72 (RSSTSLRRAP), and 79 to 97 (TPTS…PSSS). Residues 122-136 (ARDRDSDPARNDHGH) show a composition bias toward basic and acidic residues. Positions 156-166 (NQYSAASHRRS) are enriched in basic residues. Residues 175–184 (PQSSNSLTFN) are compositionally biased toward polar residues. The segment covering 271–280 (RYSDETKEPK) has biased composition (basic and acidic residues). The 14-residue stretch at 306-319 (ISAPENPVHVTHVG) folds into the CRIB domain. The segment at 408-615 (SPMISPPASP…RHRSRQSNGL (208 aa)) is disordered. Composition is skewed to low complexity over residues 516–548 (AYPA…QAQA) and 562–576 (QPQA…SQHQ). Residues 577-586 (YSRPTDANGA) show a composition bias toward polar residues. The segment covering 587–596 (QQTQRPQQPQ) has biased composition (low complexity). The Protein kinase domain occupies 634-885 (YRSFTKIGQG…AHDLLRHEFM (252 aa)). ATP contacts are provided by residues 640–648 (IGQGASGGV) and K663. The active-site Proton acceptor is D753.

It belongs to the protein kinase superfamily. STE Ser/Thr protein kinase family. STE20 subfamily.

It localises to the cytoplasm. Its subcellular location is the nucleus. The catalysed reaction is L-seryl-[protein] + ATP = O-phospho-L-seryl-[protein] + ADP + H(+). It catalyses the reaction L-threonyl-[protein] + ATP = O-phospho-L-threonyl-[protein] + ADP + H(+). Its function is as follows. MAP4K component of the MAPK pathway required for the mating pheromone response and the regulation of cell polarity and cell cycle. Phosphorylates histone H2B to form H2BS10ph. Is involved in conidiation, aerial hyphal growth and infection-related morphogenesis. The chain is Serine/threonine-protein kinase MST20 (MST20) from Pyricularia oryzae (strain 70-15 / ATCC MYA-4617 / FGSC 8958) (Rice blast fungus).